Consider the following 455-residue polypeptide: Argininosuccinate lyase (455 aa).

Belongs to the lyase 1 family. Argininosuccinate lyase subfamily.

The protein resides in the cytoplasm. It catalyses the reaction 2-(N(omega)-L-arginino)succinate = fumarate + L-arginine. It participates in amino-acid biosynthesis; L-arginine biosynthesis; L-arginine from L-ornithine and carbamoyl phosphate: step 3/3. The protein is Argininosuccinate lyase of Shewanella sp. (strain MR-4).